The sequence spans 782 residues: Cysteine-rich protein 2-binding protein (782 aa).

Phosphoserine is present on Ser4. A disordered region spans residues 13–33 (RHDDEATRTSTSEGLEEGEVE). The residue at position 231 (Lys231) is an N6-acetyllysine. A disordered region spans residues 251–282 (PVESAMELKEKRSRTQEAKDIRRAQKEAAGFL). The span at 256–276 (MELKEKRSRTQEAKDIRRAQK) shows a compositional bias: basic and acidic residues. Ser285 is modified (phosphoserine). Lys292 bears the N6-acetyllysine mark. The segment covering 315–335 (LSSSDRTPLTSPSPSPSLDFS) has biased composition (low complexity). Disordered stretches follow at residues 315-346 (LSSSDRTPLTSPSPSPSLDFSAPGTPASHSAT) and 400-460 (VRKK…EPRY). 2 stretches are compositionally biased toward basic and acidic residues: residues 405–426 (RGPEQIKQEVESEEEKPDRMDI) and 446–459 (KPQLEKDTKPKEPR). Ser416 is modified (phosphoserine). Positions 638–782 (LDYCYVRPNH…KHAFFLRLRR (145 aa)) constitute an N-acetyltransferase domain.

In terms of assembly, interacts with the LIM 1 domain of CSRP2. Component of the ADA2A-containing complex (ATAC), composed of CSRP2BP, KAT2A, TADA2L, TADA3L, ZZ3, MBIP, WDR5, YEATS2, CCDC101 and DR1. In the complex, it probably interacts directly with KAT2A, MBIP and WDR5. Expressed in skeletal muscle, heart, lung, placenta, brain, liver, pancreas and kidney. High expression in skeletal muscle and heart. Lower expression in lung.

Its subcellular location is the nucleus. It localises to the cytoplasm. In terms of biological role, component of the ATAC complex, a complex with histone acetyltransferase activity on histones H3 and H4. May function as a scaffold for the ATAC complex to promote ATAC complex stability. Has also weak histone acetyltransferase activity toward histone H4. Required for the normal progression through G1 and G2/M phases of the cell cycle. This Homo sapiens (Human) protein is Cysteine-rich protein 2-binding protein.